The following is a 535-amino-acid chain: Light-independent protochlorophyllide reductase subunit B (535 aa).

Residue Asp36 coordinates [4Fe-4S] cluster. Residue Asp292 is the Proton donor of the active site. Substrate is bound at residue 428-429; the sequence is GL. Positions 447-483 are disordered; the sequence is SDDAAKAEPDQPVSNAHGHTESKTVSQGEPIASDEGG.

It belongs to the ChlB/BchB/BchZ family. As to quaternary structure, protochlorophyllide reductase is composed of three subunits; BchL, BchN and BchB. Forms a heterotetramer of two BchB and two BchN subunits. The cofactor is [4Fe-4S] cluster.

The enzyme catalyses chlorophyllide a + oxidized 2[4Fe-4S]-[ferredoxin] + 2 ADP + 2 phosphate = protochlorophyllide a + reduced 2[4Fe-4S]-[ferredoxin] + 2 ATP + 2 H2O. It functions in the pathway porphyrin-containing compound metabolism; bacteriochlorophyll biosynthesis (light-independent). Its function is as follows. Component of the dark-operative protochlorophyllide reductase (DPOR) that uses Mg-ATP and reduced ferredoxin to reduce ring D of protochlorophyllide (Pchlide) to form chlorophyllide a (Chlide). This reaction is light-independent. The NB-protein (BchN-BchB) is the catalytic component of the complex. This chain is Light-independent protochlorophyllide reductase subunit B, found in Chlorobium phaeobacteroides (strain DSM 266 / SMG 266 / 2430).